Consider the following 549-residue polypeptide: Probable protein kinase UbiB (549 aa).

The 379-residue stretch at 123 to 501 (DFDDVPLASA…QHKAHKSNYL (379 aa)) folds into the Protein kinase domain. ATP-binding positions include 129 to 137 (LASASIAQV) and lysine 152. The active-site Proton acceptor is the aspartate 287. 2 consecutive transmembrane segments (helical) span residues 498-517 (SNYL…ILFT) and 521-540 (TLWA…LLGW).

This sequence belongs to the ABC1 family. UbiB subfamily.

The protein localises to the cell inner membrane. It functions in the pathway cofactor biosynthesis; ubiquinone biosynthesis [regulation]. Its function is as follows. Is probably a protein kinase regulator of UbiI activity which is involved in aerobic coenzyme Q (ubiquinone) biosynthesis. The sequence is that of Probable protein kinase UbiB from Shewanella denitrificans (strain OS217 / ATCC BAA-1090 / DSM 15013).